The following is a 93-amino-acid chain: Large ribosomal subunit protein uL23 (93 aa).

The protein belongs to the universal ribosomal protein uL23 family. As to quaternary structure, part of the 50S ribosomal subunit. Contacts protein L29, and trigger factor when it is bound to the ribosome.

Functionally, one of the early assembly proteins it binds 23S rRNA. One of the proteins that surrounds the polypeptide exit tunnel on the outside of the ribosome. Forms the main docking site for trigger factor binding to the ribosome. The chain is Large ribosomal subunit protein uL23 from Campylobacter jejuni subsp. doylei (strain ATCC BAA-1458 / RM4099 / 269.97).